Reading from the N-terminus, the 546-residue chain is Arginine--tRNA ligase (546 aa).

The short motif at 117-127 (ANPTGPLHIGR) is the 'HIGH' region element.

It belongs to the class-I aminoacyl-tRNA synthetase family.

Its subcellular location is the cytoplasm. It carries out the reaction tRNA(Arg) + L-arginine + ATP = L-arginyl-tRNA(Arg) + AMP + diphosphate. The sequence is that of Arginine--tRNA ligase from Thermoplasma acidophilum (strain ATCC 25905 / DSM 1728 / JCM 9062 / NBRC 15155 / AMRC-C165).